The primary structure comprises 190 residues: Prostaglandin-H2 D-isomerase (190 aa).

The N-terminal stretch at 1–22 is a signal peptide; it reads MATHHTLWMGLALLGVLGDLQA. N51 is a glycosylation site (N-linked (GlcNAc...) asparagine). C65 functions as the Nucleophile in the catalytic mechanism. N-linked (GlcNAc...) asparagine glycosylation occurs at N78. C89 and C186 are disulfide-bonded.

Belongs to the calycin superfamily. Lipocalin family. As to quaternary structure, monomer.

It is found in the rough endoplasmic reticulum. The protein localises to the nucleus membrane. It localises to the golgi apparatus. Its subcellular location is the cytoplasm. The protein resides in the perinuclear region. It is found in the secreted. The enzyme catalyses prostaglandin H2 = prostaglandin D2. In terms of biological role, catalyzes the conversion of PGH2 to PGD2, a prostaglandin involved in smooth muscle contraction/relaxation and a potent inhibitor of platelet aggregation. Involved in a variety of CNS functions, such as sedation, NREM sleep and PGE2-induced allodynia, and may have an anti-apoptotic role in oligodendrocytes. Binds small non-substrate lipophilic molecules, including biliverdin, bilirubin, retinal, retinoic acid and thyroid hormone, and may act as a scavenger for harmful hydrophobic molecules and as a secretory retinoid and thyroid hormone transporter. Possibly involved in development and maintenance of the blood-brain, blood-retina, blood-aqueous humor and blood-testis barrier. It is likely to play important roles in both maturation and maintenance of the central nervous system and male reproductive system. Involved in PLA2G3-dependent maturation of mast cells. PLA2G3 is secreted by immature mast cells and acts on nearby fibroblasts upstream to PTDGS to synthesize PGD2, which in turn promotes mast cell maturation and degranulation via PTGDR. This is Prostaglandin-H2 D-isomerase (PTGDS) from Gorilla gorilla gorilla (Western lowland gorilla).